The following is a 295-amino-acid chain: Small ribosomal subunit protein uS2 (295 aa).

Residue Ser-2 is modified to N-acetylserine. At Ser-43 the chain carries Phosphoserine. Lys-52 is subject to N6-acetyllysine. The interval 54–113 is interaction with PPP1R16B; that stretch reads TWEKLLLAARAIVAIENPADVSVISSRNTGQRAVLKFAAATGATPIAGRFTPGTFTNQIQ. Lys-89 is modified (N6-acetyllysine; alternate). Lys-89 is covalently cross-linked (Glycyl lysine isopeptide (Lys-Gly) (interchain with G-Cter in SUMO2); alternate). Thr-97 is subject to Phosphothreonine. 2 laminin-binding regions span residues 161-180 and 205-229; these read IPCN…MLAR and RDPE…EFQG. 5 [DE]-W-[ST] repeats span residues 230 to 232, 247 to 249, 266 to 268, 275 to 277, and 293 to 295; these read EWT, DWS, and EWS. Positions 242–295 are laminin-binding; sequence QPEVADWSEGVQVPSVPIQQFPTEDWSAQPATEDWSAAPTAQATEWVGTTTEWS. The tract at residues 266 to 295 is disordered; the sequence is DWSAQPATEDWSAAPTAQATEWVGTTTEWS. Over residues 280–295 the composition is skewed to polar residues; it reads PTAQATEWVGTTTEWS.

The protein belongs to the universal ribosomal protein uS2 family. In terms of assembly, monomer (37LRP) and homodimer (67LR). Component of the small ribosomal subunit. Mature ribosomes consist of a small (40S) and a large (60S) subunit. The 40S subunit contains about 33 different proteins and 1 molecule of RNA (18S). The 60S subunit contains about 49 different proteins and 3 molecules of RNA (28S, 5.8S and 5S). Interacts with RPS21. Interacts with several laminins including at least LAMB1. Interacts with MDK. The mature dimeric form interacts with PPP1R16B (via its fourth ankyrin repeat). Interacts with PPP1CA only in the presence of PPP1R16B. In terms of processing, acylated. Acylation may be a prerequisite for conversion of the monomeric 37 kDa laminin receptor precursor (37LRP) to the mature dimeric 67 kDa laminin receptor (67LR), and may provide a mechanism for membrane association. Post-translationally, cleaved by stromelysin-3 (ST3) at the cell surface. Cleavage by stromelysin-3 may be a mechanism to alter cell-extracellular matrix interactions.

It localises to the cell membrane. The protein resides in the cytoplasm. Its subcellular location is the nucleus. Its function is as follows. Required for the assembly and/or stability of the 40S ribosomal subunit. Required for the processing of the 20S rRNA-precursor to mature 18S rRNA in a late step of the maturation of 40S ribosomal subunits. Also functions as a cell surface receptor for laminin. Plays a role in cell adhesion to the basement membrane and in the consequent activation of signaling transduction pathways. May play a role in cell fate determination and tissue morphogenesis. Also acts as a receptor for several other ligands, including the pathogenic prion protein, viruses, and bacteria. Acts as a PPP1R16B-dependent substrate of PPP1CA. The chain is Small ribosomal subunit protein uS2 from Oryctolagus cuniculus (Rabbit).